The primary structure comprises 215 residues: MGLRTTKQMGRGTKAPGHQEDHMVKEPVEDTDPSTLSFNMSDKYPIQDTELPKAEECDTITLNCPRNSDMKNQGEENGFPDSTGDPLPEISKDNSCKENCTCSSCLLRAPTISDLLNDQDLLDVIRIKLDPCHPTVKNWRNFASKWGMSYDELCFLEQRPQSPTLEFLLRNSQRTVGQLMELCRLYHRADVEKVLRRWVDEEWPKRERGDPSRHF.

Disordered regions lie at residues 1 to 41 (MGLR…FNMS) and 62 to 86 (LNCP…TGDP). Basic and acidic residues predominate over residues 17–28 (GHQEDHMVKEPV). Positions 123 to 202 (DVIRIKLDPC…KVLRRWVDEE (80 aa)) constitute a Death domain.

In terms of assembly, self-associates and binds EDAR, TRAF1, TRAF2 and TRAF3. Detected in adult pancreas, placenta and fetal skin, and at lower levels in lung, thymus, prostate and testis.

The protein resides in the cytoplasm. Functionally, adapter protein that interacts with EDAR DEATH domain and couples the receptor to EDA signaling pathway during morphogenesis of ectodermal organs. Mediates the activation of NF-kappa-B. The chain is Ectodysplasin-A receptor-associated adapter protein (EDARADD) from Homo sapiens (Human).